A 414-amino-acid polypeptide reads, in one-letter code: Putative gustatory receptor 47b (414 aa).

Residues 1-5 (MQRDD) are Cytoplasmic-facing. A helical transmembrane segment spans residues 6–26 (GFVYCYGNLYSLLLYWGLVTI). Topologically, residues 27 to 40 (RVRSPDRGGAFSNR) are extracellular. A helical membrane pass occupies residues 41 to 61 (WTVCYALFTRSFMVICFMATV). At 62 to 142 (MTKLRDPEMS…QWNYRRARLK (81 aa)) the chain is on the cytoplasmic side. A helical membrane pass occupies residues 143–163 (YWYGTVIVGFCFFSFSISLIF). The Extracellular portion of the chain corresponds to 164 to 182 (DTTRCTCGIPSTLLMAFTY). Residues 183-203 (TLLTSSVGLLGFVHIGIMDFI) traverse the membrane as a helical segment. Topologically, residues 204-249 (RVRLRLVQQLLHQLYQADDSSEVHERIAYLFEMSKRCSFLLAELNG) are cytoplasmic. A helical transmembrane segment spans residues 250–270 (VFGFAAAAGIFYDFTIMTCFV). The Extracellular portion of the chain corresponds to 271–291 (YVICQKLLEREPWDPEYVYML). Residues 292–312 (LHVAIHTYKVVITSTYGYLLL) form a helical membrane-spanning segment. Topologically, residues 313 to 364 (REKRNCMHLLSQYSRYFSGQDVARRKTEDFQHWRMHNRQAAMVGSTTLLSVS) are cytoplasmic. The helical transmembrane segment at 365–385 (TIYLVYNGMANYVIILVQLLF) threads the bilayer. The Extracellular portion of the chain corresponds to 386–414 (QQQQIKDHQLTSGKDVDIVGPMGPITHMD).

The protein belongs to the insect chemoreceptor superfamily. Gustatory receptor (GR) family. Gr57a subfamily. As to expression, expressed in neurons of the terminal external chemosensory organ of larvae.

Its subcellular location is the cell membrane. Probable gustatory receptor which mediates acceptance or avoidance behavior, depending on its substrates. The protein is Putative gustatory receptor 47b (Gr47b) of Drosophila melanogaster (Fruit fly).